The sequence spans 448 residues: Binary larvicide subunit BinB (448 aa).

The tract at residues 19-200 is beta-trefoil domain; it reads TNYPLNTTPT…FVNSSFYAAA (182 aa). Cysteine 67 and cysteine 161 are oxidised to a cystine. Residues 226–407 are probable pore-forming domain; the sequence is PKDAVRAVKG…APITNPLTLT (182 aa).

This sequence belongs to the toxin_10 family. Forms a heterodimer with BinA. Post-translationally, processed by proteases extracted from mosquito larval gut.

The protein resides in the spore. The protein localises to the perispore. In terms of biological role, component of a binary toxin active against Culex and some Aedes mosquito larvae. This subunit is responsible for localized binding to specific regions of the host larval gut. The individual subunits are not toxic. BinAB and this subunit alone bind to the gastric caecum and posterior midgut of C.quinquefasciatus larvae. Binary toxin internalization into host gut cells requires both proteins. Does not bind to the midgut of Aedes aegypti. Toxic to Aedes atropalpus mosquito larvae; mortality towards both C.quinquefasciatus and A.atropalpus is maximal by 48 hours. A.aegypti is not very susceptible to this toxin. Binding component of binary toxin. The 51 kDa polypeptide acts synergetically with the 42 kDa polypeptide for expression of a larvicidal toxin. The sequence is that of Binary larvicide subunit BinB from Lysinibacillus sphaericus (Bacillus sphaericus).